The following is an 838-amino-acid chain: Transient receptor potential cation channel subfamily V member 1 (838 aa).

Disordered stretches follow at residues Met1–Cys63 and Arg86–Pro109. Residues Met1–Arg432 are Cytoplasmic-facing. The stretch at Arg110–Arg138 is one ANK 1 repeat. ATP is bound at residue Arg115. Residue Ser116 is modified to Phosphoserine; by PKA and PKD. Position 144 is a phosphothreonine; by PKA; in vitro (Thr144). The ANK 2 repeat unit spans residues Thr153 to Ser185. Residues Lys155, Lys160, Asn164, Tyr199–Gln202, and Glu210–Arg211 each bind ATP. 4 ANK repeats span residues Thr203–Gln228, Glu249–Asp276, Asn285–Pro321, and Thr335–His358. Phosphothreonine; by PKA; in vitro is present on Thr370. An ANK 7 repeat occupies Asn393 to Val415. Residues Ile433–Tyr453 form a helical membrane-spanning segment. Residues Tyr454–Asp471 are Extracellular-facing. The helical transmembrane segment at Tyr472–Leu497 threads the bilayer. Topologically, residues Gln498 to Ser510 are cytoplasmic. Phosphoserine; by PKC/PRKCE is present on Ser502. Tyr511–Ser512 lines the resiniferatoxin pocket. Residues Tyr511–Phe531 traverse the membrane as a helical segment. Topologically, residues Ser532–Lys535 are extracellular. Residues Glu536 to Thr556 form a helical membrane-spanning segment. Positions 550 and 557 each coordinate resiniferatoxin. Topologically, residues Arg557–Lys571 are cytoplasmic. The helical transmembrane segment at Met572–Ile599 threads the bilayer. Residues Glu600 to Ser626 lie on the Extracellular side of the membrane. N-linked (GlcNAc...) asparagine glycosylation is present at Asn604. Residues Tyr627–Phe649 constitute an intramembrane region (pore-forming). Gly643 is a binding site for Na(+). Positions Gly643–Asp646 match the Selectivity filter motif. Ca(2+) is bound at residue Asp646. At Thr650–Ala657 the chain is on the extracellular side. A helical membrane pass occupies residues Val658–Val686. The tract at residues Glu684–Phe712 is AD. The Cytoplasmic portion of the chain corresponds to Asn687 to Lys838. Thr704 bears the Phosphothreonine mark. Residues Glu767 to Thr801 are interaction with calmodulin. Ser774 is subject to Phosphoserine; by PKA; in vitro. The required for PIP2-mediated channel inhibition stretch occupies residues Leu777–Leu792. Ser800 carries the post-translational modification Phosphoserine; by PKC/PRKCE and PKC/PRKCZ. Ser820 bears the Phosphoserine; by PKA; in vitro mark.

It belongs to the transient receptor (TC 1.A.4) family. TrpV subfamily. TRPV1 sub-subfamily. In terms of assembly, homotetramer. Interacts with PIRT. May also form a heteromeric channel with TRPV3. Interacts with CALM, PRKCM and CSK. Interacts with PRKCG and NTRK1, probably by forming a trimeric complex. Interacts with the Scolopendra mutilans RhTx toxin. Interacts with the spider Tau-theraphotoxin-Hs1a. Interacts with TMEM100. Interacts with PACS2. In terms of processing, phosphorylation by PKA reverses capsaicin-induced dephosphorylation at multiple sites, probably including Ser-116 as a major phosphorylation site. Phosphorylation by CAMKII seems to regulate binding to vanilloids. Phosphorylated and modulated by PRKCE, PRKCM and probably PRKCZ. Dephosphorylation by calcineurin seems to lead to receptor desensitization and phosphorylation by CAMKII recovers activity. As to expression, predominantly expressed in trigeminal and dorsal root sensory ganglia. Expressed also in hippocampus, cortex, cerebellum, olfactory bulb, mesencephalon and hindbrain. High expression in the cell bodies and dendrites of neurons in the hippocampus and in the cortex. In the brain detected also in astrocytes and pericytes (at protein level). Isoform 1 and isoform 3 are expressed in brain and peripheral blood mononuclear cells.

It is found in the postsynaptic cell membrane. The protein localises to the cell projection. Its subcellular location is the dendritic spine membrane. The protein resides in the cell membrane. The enzyme catalyses Ca(2+)(in) = Ca(2+)(out). The catalysed reaction is Mg(2+)(in) = Mg(2+)(out). It catalyses the reaction Na(+)(in) = Na(+)(out). It carries out the reaction K(+)(in) = K(+)(out). With respect to regulation, channel activity is activated via the interaction with PIRT and phosphatidylinositol 4,5-bisphosphate (PIP2). Both PIRT and PIP2 are required to activate channel activity. The channel is sensitized by ATP binding. Repeated stimulation with capsaicin gives rise to progressively smaller responses, due to desensitization. This desensitization is triggered by the influx of calcium ions and is inhibited by elevated ATP levels. Ca(2+) and CALM displace ATP from its binding site and trigger a conformation change that leads to a closed, desensitized channel. Intracellular PIP2 inhibits desensitization. The double-knot toxin (DkTx) from the Chinese earth tiger tarantula activates the channel and traps it in an open conformation. The Scolopendra mutilans RhTx toxin potentiates the heat activation pathway mediated by this channel by binding to the charge-rich outer pore region (in an activated state). Non-selective calcium permeant cation channel involved in detection of noxious chemical and thermal stimuli. Seems to mediate proton influx and may be involved in intracellular acidosis in nociceptive neurons. Involved in mediation of inflammatory pain and hyperalgesia. Sensitized by a phosphatidylinositol second messenger system activated by receptor tyrosine kinases, which involves PKC isozymes and PCL. Activation by vanilloids, like capsaicin, and temperatures higher than 42 degrees Celsius. Upon activation, exhibits a time- and Ca(2+)-dependent outward rectification, followed by a long-lasting refractory state. Mild extracellular acidic pH (6.5) potentiates channel activation by noxious heat and vanilloids, whereas acidic conditions (pH &lt;6) directly activate the channel. Can be activated by endogenous compounds, including 12-hydroperoxytetraenoic acid and bradykinin. Acts as ionotropic endocannabinoid receptor with central neuromodulatory effects. Triggers a form of long-term depression (TRPV1-LTD) mediated by the endocannabinoid anandamine in the hippocampus and nucleus accumbens by affecting AMPA receptors endocytosis. In terms of biological role, does not display channel activity in response to noxious chemical compounds, such as capsaicin and the vanilloid resiniferatoxin. Channel activity is not elicited by mildly acidic extracellular pH, and only slight channel activity is observed in response to noxiuos heat stimuli. This chain is Transient receptor potential cation channel subfamily V member 1 (Trpv1), found in Rattus norvegicus (Rat).